We begin with the raw amino-acid sequence, 154 residues long: MKLLVLCIFAMMATLAMSRRWHYVPPKFLNKAFEVALKVQIIAGFDRTLVKWLRTHGGTLSHVQKKALYFVNRRYMQTHWANYMLWINKKTDALGRTPVVGDYTRLGAEIGRRIDMDYFYNFLKGRNMIPKYLPYMEEINRMRSADIPVKYMGK.

An N-terminal signal peptide occupies residues 1–18; that stretch reads MKLLVLCIFAMMATLAMS.

As to quaternary structure, homodimer. In terms of tissue distribution, sperm.

Its function is as follows. Dissolves the egg vitelline layer nonenzymatically during fertilization. It creates a hole of about 3 mu-m in diameter through which the sperm pass. The sequence is that of Egg-lysin from Haliotis sorenseni (White abalone).